Reading from the N-terminus, the 318-residue chain is MSIVEEPYLQLIRDILEKGHEKSDRTGTGTKSLFGYQMRFNLAEGFPLLTTKKVPFGLIKSELLWFLRGDTNIRFLLEHNNHIWDEWAFKNWVESDEYHGPDMTNFGLRAQEDDNFNKVYQDEKKKFCQKIVEDQEFANKFGNLGDVYGAQWRHWQTRNGETIDQIKDVIETIKNNPDSRRMIVTAWNPEDVPLSALPPCHTLFQFYVNDGKLSCQLYQRSADVFLGVPFNIASYALLTHMIARETGLEVGEFVHTLGDAHIYLNHLDQVNEQLQRKPNDAPTLWLNPEKKNIMDFEMEDIKVKNYHSHSAIKAPVAV.

Residues Arg-25 and Arg-180 to Arg-181 contribute to the dUMP site. Catalysis depends on Cys-200, which acts as the Nucleophile. DUMP-binding positions include Arg-220–Asp-223, Asn-231, and His-261–Tyr-263. A (6R)-5,10-methylene-5,6,7,8-tetrahydrofolate-binding site is contributed by Asp-223. Ala-317 is a (6R)-5,10-methylene-5,6,7,8-tetrahydrofolate binding site.

Belongs to the thymidylate synthase family. Bacterial-type ThyA subfamily. As to quaternary structure, homodimer.

The protein localises to the cytoplasm. The catalysed reaction is dUMP + (6R)-5,10-methylene-5,6,7,8-tetrahydrofolate = 7,8-dihydrofolate + dTMP. The protein operates within pyrimidine metabolism; dTTP biosynthesis. Its function is as follows. Catalyzes the reductive methylation of 2'-deoxyuridine-5'-monophosphate (dUMP) to 2'-deoxythymidine-5'-monophosphate (dTMP) while utilizing 5,10-methylenetetrahydrofolate (mTHF) as the methyl donor and reductant in the reaction, yielding dihydrofolate (DHF) as a by-product. This enzymatic reaction provides an intracellular de novo source of dTMP, an essential precursor for DNA biosynthesis. This Ligilactobacillus salivarius (strain UCC118) (Lactobacillus salivarius) protein is Thymidylate synthase.